An 81-amino-acid polypeptide reads, in one-letter code: NAD(P)H-quinone oxidoreductase subunit O (81 aa).

Belongs to the complex I NdhO subunit family. As to quaternary structure, NDH-1 can be composed of about 15 different subunits; different subcomplexes with different compositions have been identified which probably have different functions.

It localises to the cellular thylakoid membrane. The enzyme catalyses a plastoquinone + NADH + (n+1) H(+)(in) = a plastoquinol + NAD(+) + n H(+)(out). The catalysed reaction is a plastoquinone + NADPH + (n+1) H(+)(in) = a plastoquinol + NADP(+) + n H(+)(out). In terms of biological role, NDH-1 shuttles electrons from an unknown electron donor, via FMN and iron-sulfur (Fe-S) centers, to quinones in the respiratory and/or the photosynthetic chain. The immediate electron acceptor for the enzyme in this species is believed to be plastoquinone. Couples the redox reaction to proton translocation, and thus conserves the redox energy in a proton gradient. Cyanobacterial NDH-1 also plays a role in inorganic carbon-concentration. This chain is NAD(P)H-quinone oxidoreductase subunit O, found in Prochlorococcus marinus (strain MIT 9303).